The sequence spans 360 residues: Ribosomal RNA large subunit methyltransferase F (360 aa).

The disordered stretch occupies residues 1 to 38 (MTRSTTPPMRAKHSSAKRSPSRSAAKVNPVSVKPNKPL). Positions 10–20 (RAKHSSAKRSP) are enriched in basic residues.

Belongs to the methyltransferase superfamily. METTL16/RlmF family.

The protein resides in the cytoplasm. The enzyme catalyses adenosine(1618) in 23S rRNA + S-adenosyl-L-methionine = N(6)-methyladenosine(1618) in 23S rRNA + S-adenosyl-L-homocysteine + H(+). In terms of biological role, specifically methylates the adenine in position 1618 of 23S rRNA. The chain is Ribosomal RNA large subunit methyltransferase F from Shewanella frigidimarina (strain NCIMB 400).